The sequence spans 159 residues: Na(+)/H(+) antiporter subunit E1 (159 aa).

4 helical membrane passes run 1–21 (MAVQ…VTNS), 27–47 (FVLG…VLPG), 49–69 (FYVI…IELI), and 101–121 (WQIV…VLGV).

Belongs to the CPA3 antiporters (TC 2.A.63) subunit E family. As to quaternary structure, may form a heterooligomeric complex that consists of seven subunits: mnhA1, mnhB1, mnhC1, mnhD1, mnhE1, mnhF1 and mnhG1.

It is found in the cell membrane. Mnh complex is a Na(+)/H(+) antiporter involved in Na(+) excretion. This is Na(+)/H(+) antiporter subunit E1 (mnhE1) from Staphylococcus aureus (strain Mu3 / ATCC 700698).